Consider the following 201-residue polypeptide: Dephospho-CoA kinase (201 aa).

Residues 10 to 201 enclose the DPCK domain; the sequence is LIGLTGGIAT…PQIIKAWHHR (192 aa). 18–23 is a binding site for ATP; it reads ATGKST.

Belongs to the CoaE family.

It localises to the cytoplasm. It carries out the reaction 3'-dephospho-CoA + ATP = ADP + CoA + H(+). Its pathway is cofactor biosynthesis; coenzyme A biosynthesis; CoA from (R)-pantothenate: step 5/5. Catalyzes the phosphorylation of the 3'-hydroxyl group of dephosphocoenzyme A to form coenzyme A. The polypeptide is Dephospho-CoA kinase (Synechocystis sp. (strain ATCC 27184 / PCC 6803 / Kazusa)).